Consider the following 1824-residue polypeptide: Afadin (1824 aa).

Residues 39–133 (FHGVMRFYFQ…GRFVLKNEND (95 aa)) form the Ras-associating 1 domain. The disordered stretch occupies residues 128–194 (LKNENDAIPP…DRPFQGEDVE (67 aa)). Residues 146–185 (EKQEKEGVIQNFKRTLSKKEKKEKKKREKEALRQASDKDD) are a coiled coil. A compositionally biased stretch (basic residues) spans 160–172 (TLSKKEKKEKKKR). Positions 173–189 (EKEALRQASDKDDRPFQ) are enriched in basic and acidic residues. 3 positions are modified to phosphoserine: S216, S246, and S256. A Ras-associating 2 domain is found at 246–348 (SGGTLRIYAD…LVFQLKRRPP (103 aa)). A compositionally biased stretch (basic and acidic residues) spans 349–371 (DHIPKKTKKHLEGKTPKGKERAD). A disordered region spans residues 349 to 378 (DHIPKKTKKHLEGKTPKGKERADGSGYGST). 2 positions are modified to phosphoserine: S391 and S424. The 67-residue stretch at 426-492 (TEVGTEKLDD…LQSGMKVQFG (67 aa)) folds into the FHA domain. Phosphoserine occurs at positions 512, 557, 562, 589, and 655. A disordered region spans residues 534–595 (FDLGGDIHSG…RQESRTQDAS (62 aa)). A compositionally biased stretch (basic and acidic residues) spans 580 to 591 (QQPDYRRQESRT). Residues 668–908 (NKMVSMMEGV…IENVVTVAEN (241 aa)) form the Dilute domain. The PDZ domain occupies 1007 to 1093 (IITVTLKKQN…VVTLEVAKQG (87 aa)). S1083, S1107, S1126, S1140, S1143, S1172, S1173, S1182, and S1199 each carry phosphoserine. Residues 1107-1223 (SPMMQRISDR…PRPEAYPIPT (117 aa)) form a disordered region. Residues 1113 to 1128 (ISDRRGSGKPRPKSEG) are compositionally biased toward basic and acidic residues. The span at 1132–1143 (YNNSTQNGSPES) shows a compositional bias: polar residues. Positions 1152–1172 (SEPKKLPGDDRLMKNRADHRS) are enriched in basic and acidic residues. The span at 1190-1210 (ASGTTAKITSVSTGNLCTEEQ) shows a compositional bias: polar residues. Residues T1211 and T1232 each carry the phosphothreonine modification. Disordered stretches follow at residues 1235–1473 (ASKS…LQRP), 1501–1528 (SKEE…EKQQ), and 1569–1824 (RLQE…LNTK). Phosphoserine is present on S1238. Basic and acidic residues-rich tracts occupy residues 1252–1262 (YEEKPHMHTDS) and 1274–1302 (RSQE…KSDS). S1275 is subject to Phosphoserine. Residues 1309–1318 (SSSLDSSTSS) are compositionally biased toward low complexity. The span at 1325 to 1337 (SSKSVTPASTLTK) shows a compositional bias: polar residues. Residue S1328 is modified to Phosphoserine. T1330 bears the Phosphothreonine mark. The span at 1345-1356 (TPAAIPATPVAV) shows a compositional bias: low complexity. The span at 1364 to 1373 (LPPPPPPPPV) shows a compositional bias: pro residues. Residues 1407-1441 (AERRKREEHQRWYEKEKARLEEERERKRREQERKL) are compositionally biased toward basic and acidic residues. A coiled-coil region spans residues 1408–1448 (ERRKREEHQRWYEKEKARLEEERERKRREQERKLGQMRTQS). S1501 and S1512 each carry phosphoserine. The segment covering 1515–1528 (PWKRDAKEKLEKQQ) has biased composition (basic and acidic residues). Residues 1523 to 1667 (KLEKQQQMHI…SRLEAERRRQ (145 aa)) are a coiled coil. The segment covering 1578–1589 (EDDEEEEDDDVD) has biased composition (acidic residues). A compositionally biased stretch (basic and acidic residues) spans 1597–1677 (LEAERRARLQ…HDEAARRLLE (81 aa)). A compositionally biased stretch (pro residues) spans 1694–1709 (PPSPSPAPGAPPPPPQ). 5 positions are modified to phosphoserine: S1696, S1721, S1774, S1779, and S1799. Residues 1762–1776 (DACRDAKEKRSKSQD) show a composition bias toward basic and acidic residues. The residue at position 1807 (K1807) is an N6-acetyllysine. The span at 1813–1824 (KLTELENELNTK) shows a compositional bias: basic and acidic residues.

In terms of assembly, homodimer. Interacts with F-actin, nectin and NECTIN3. Essential for the association of nectin and E-cadherin. Isoform 1/s-afadin does not interact with F-actin. Interacts with ZO-1 and occludin, but probably in an indirect manner. Interacts with RIT1 and RIT2. Interacts with NRXN1 and BCR. Interacts with ADAM10; the interaction locks ADAM10 at adherens junctions following ADAM10 recruitment to adherens junctions by TSPAN33.

It is found in the cell junction. Its subcellular location is the adherens junction. In terms of biological role, belongs to an adhesion system, probably together with the E-cadherin-catenin system, which plays a role in the organization of homotypic, interneuronal and heterotypic cell-cell adherens junctions (AJs). Nectin- and actin-filament-binding protein that connects nectin to the actin cytoskeleton. May play a key role in the organization of epithelial structures of the embryonic ectoderm. Essential for the organization of adherens junctions. The protein is Afadin of Homo sapiens (Human).